An 88-amino-acid chain; its full sequence is uncharacterized protein (88 aa).

This is an uncharacterized protein from Orgyia pseudotsugata (Douglas-fir tussock moth).